The sequence spans 1377 residues: Pleckstrin homology-like domain family B member 1 (1377 aa).

Phosphoserine is present on serine 51. The FHA domain occupies 64–125 (TVIGSAARDI…LTQGCMLCLG (62 aa)). Arginine 131 carries the post-translational modification Asymmetric dimethylarginine. The segment at 150 to 187 (RAPGPPYSPVPAESESLVNGNHTPQTATRGPSACASHS) is disordered. The segment covering 165 to 178 (SLVNGNHTPQTATR) has biased composition (polar residues). Phosphoserine occurs at positions 192, 220, and 223. 2 disordered regions span residues 211 to 334 (AAGK…LTDS) and 370 to 535 (GALS…GSFS). The segment covering 252-273 (SPAFSPLSSPASSGSCASHSPS) has biased composition (low complexity). Positions 288–303 (RSSSYHLALQPPQSRP) are enriched in polar residues. Over residues 309–322 (ESPRLSRKGGHERP) the composition is skewed to basic and acidic residues. A phosphoserine mark is found at serine 324, serine 334, serine 381, serine 404, serine 430, serine 443, serine 461, serine 470, serine 489, and serine 501. The span at 456–473 (ELPPLSPSLSRRALSPLP) shows a compositional bias: low complexity. Basic and acidic residues predominate over residues 481–491 (KLNREVAESPR). An Omega-N-methylarginine modification is found at arginine 512. 2 positions are modified to phosphoserine: serine 518 and serine 520. Threonine 522 is subject to Phosphothreonine. 7 positions are modified to phosphoserine: serine 533, serine 539, serine 551, serine 555, serine 563, serine 578, and serine 583. Over residues 653–663 (PSRGLAGASGR) the composition is skewed to low complexity. Disordered stretches follow at residues 653-707 (PSRG…APST), 936-1019 (TGPA…GSLP), and 1119-1138 (SMETSISTGGNSACSPDNMS). A compositionally biased stretch (basic and acidic residues) spans 677–691 (ESMERSDEENLKEEC). Serine 678 bears the Phosphoserine mark. Positions 683–809 (DEENLKEECS…TETKLFEDLE (127 aa)) form a coiled coil. Phosphoserine occurs at positions 971 and 1017. A compositionally biased stretch (low complexity) spans 971–992 (SPLPRTRSGPLPSSSGSSSSSS). Positions 1009–1018 (LLTQNGTGSL) are enriched in polar residues. Positions 1144–1208 (DMGKIEEMEK…ARRQQLVEKE (65 aa)) form a coiled coil. The region spanning 1256 to 1370 (SKVCRGYLVK…WMDVIVTGAE (115 aa)) is the PH domain.

In Homo sapiens (Human), this protein is Pleckstrin homology-like domain family B member 1 (PHLDB1).